We begin with the raw amino-acid sequence, 444 residues long: ATPase PAAT (444 aa).

Residues Ser177, Ser182, and Ser254 each carry the phosphoserine modification. The interval 279 to 300 is disordered; the sequence is SAQPSGEGNTTNHDEGHLMPQN. Positions 280–289 are enriched in polar residues; that stretch reads AQPSGEGNTT. Ser302 carries the post-translational modification Phosphoserine. Residues 424-444 form a disordered region; it reads PPPGMPLRHYDSRERLSNGER. The segment covering 431–444 has biased composition (basic and acidic residues); the sequence is RHYDSRERLSNGER.

As to quaternary structure, homodimer. Interacts with ABCB7, ABCB8/MITOSUR and ABCB10.

Its subcellular location is the cytoplasm. It is found in the mitochondrion. The enzyme catalyses ATP + H2O = ADP + phosphate + H(+). In terms of biological role, ATPase that regulates mitochondrial ABC transporters ABCB7, ABCB8/MITOSUR and ABCB10. Regulates mitochondrial ferric concentration and heme biosynthesis and plays a role in the maintenance of mitochondrial homeostasis and cell survival. The sequence is that of ATPase PAAT from Mus musculus (Mouse).